The following is a 311-amino-acid chain: Lipoyl synthase (311 aa).

[4Fe-4S] cluster is bound by residues Cys47, Cys52, Cys58, Cys73, Cys77, Cys80, and Ser286. The Radical SAM core domain maps to 59-276; sequence WSRHTATYLA…RSVGESLGLF (218 aa).

The protein belongs to the radical SAM superfamily. Lipoyl synthase family. It depends on [4Fe-4S] cluster as a cofactor.

The protein resides in the cytoplasm. It carries out the reaction [[Fe-S] cluster scaffold protein carrying a second [4Fe-4S](2+) cluster] + N(6)-octanoyl-L-lysyl-[protein] + 2 oxidized [2Fe-2S]-[ferredoxin] + 2 S-adenosyl-L-methionine + 4 H(+) = [[Fe-S] cluster scaffold protein] + N(6)-[(R)-dihydrolipoyl]-L-lysyl-[protein] + 4 Fe(3+) + 2 hydrogen sulfide + 2 5'-deoxyadenosine + 2 L-methionine + 2 reduced [2Fe-2S]-[ferredoxin]. It functions in the pathway protein modification; protein lipoylation via endogenous pathway; protein N(6)-(lipoyl)lysine from octanoyl-[acyl-carrier-protein]: step 2/2. In terms of biological role, catalyzes the radical-mediated insertion of two sulfur atoms into the C-6 and C-8 positions of the octanoyl moiety bound to the lipoyl domains of lipoate-dependent enzymes, thereby converting the octanoylated domains into lipoylated derivatives. The sequence is that of Lipoyl synthase from Chlamydia trachomatis serovar D (strain ATCC VR-885 / DSM 19411 / UW-3/Cx).